A 190-amino-acid polypeptide reads, in one-letter code: dCTP deaminase (190 aa).

107–112 (KSTYAR) is a binding site for dCTP. Glutamate 133 acts as the Proton donor/acceptor in catalysis. Glutamine 152, tyrosine 166, and glutamine 176 together coordinate dCTP.

Belongs to the dCTP deaminase family. Homotrimer.

The enzyme catalyses dCTP + H2O + H(+) = dUTP + NH4(+). Its pathway is pyrimidine metabolism; dUMP biosynthesis; dUMP from dCTP (dUTP route): step 1/2. Catalyzes the deamination of dCTP to dUTP. The protein is dCTP deaminase of Campylobacter hominis (strain ATCC BAA-381 / DSM 21671 / CCUG 45161 / LMG 19568 / NCTC 13146 / CH001A).